The sequence spans 536 residues: 2-isopropylmalate synthase (536 aa).

In terms of domain architecture, Pyruvate carboxyltransferase spans V8–T273. Positions 17, 208, 210, and 244 each coordinate Mn(2+). The segment at K408–L536 is regulatory domain.

This sequence belongs to the alpha-IPM synthase/homocitrate synthase family. LeuA type 1 subfamily. In terms of assembly, homodimer. The cofactor is Mn(2+).

The protein localises to the cytoplasm. The catalysed reaction is 3-methyl-2-oxobutanoate + acetyl-CoA + H2O = (2S)-2-isopropylmalate + CoA + H(+). It participates in amino-acid biosynthesis; L-leucine biosynthesis; L-leucine from 3-methyl-2-oxobutanoate: step 1/4. Catalyzes the condensation of the acetyl group of acetyl-CoA with 3-methyl-2-oxobutanoate (2-ketoisovalerate) to form 3-carboxy-3-hydroxy-4-methylpentanoate (2-isopropylmalate). This chain is 2-isopropylmalate synthase, found in Prochlorococcus marinus (strain SARG / CCMP1375 / SS120).